A 247-amino-acid polypeptide reads, in one-letter code: Ribosomal RNA small subunit methyltransferase J (247 aa).

S-adenosyl-L-methionine is bound by residues 101–102 (RD), 117–118 (ER), 153–154 (SS), and Asp171.

Belongs to the methyltransferase superfamily. RsmJ family.

The protein resides in the cytoplasm. The catalysed reaction is guanosine(1516) in 16S rRNA + S-adenosyl-L-methionine = N(2)-methylguanosine(1516) in 16S rRNA + S-adenosyl-L-homocysteine + H(+). In terms of biological role, specifically methylates the guanosine in position 1516 of 16S rRNA. The protein is Ribosomal RNA small subunit methyltransferase J of Photorhabdus laumondii subsp. laumondii (strain DSM 15139 / CIP 105565 / TT01) (Photorhabdus luminescens subsp. laumondii).